The sequence spans 276 residues: MNSKRMLLLVLFAFSLMLVERYFRNHQVEELRLSDWFHPRKRPDVITKTDWLAPVLWEGTFDRRVLEKHYRRRNITVGLAVFATGRFAEEYLRPFLHSANKHFMTGYRVIFYIMVDAFFKLPDIEPSPLRTFKAFKVGTERWWLDGPLVHVKSLGEHIASHIQDEVDFLFSMAANQVFQNEFGVETLGPLVAQLHAWWYFRNTKNFPYERRPTSAACIPFGQGDFYYGNLMVGGTPHNILDFIKEYLNGVIHDIKNGLNSTYEKHLNKYFYLNKPT.

At 1-6 the chain is on the cytoplasmic side; that stretch reads MNSKRM. A helical; Signal-anchor for type II membrane protein membrane pass occupies residues 7–23; that stretch reads LLLVLFAFSLMLVERYF. Residues 24-276 are Lumenal-facing; it reads RNHQVEELRL…NKYFYLNKPT (253 aa). N-linked (GlcNAc...) asparagine glycosylation occurs at Asn-74. Residues 82-87, 173-175, and 195-198 contribute to the substrate site; these read FATGRF, AAN, and HAWW. The active-site Nucleophile is the Glu-263.

This sequence belongs to the glycosyltransferase 6 family. Mn(2+) serves as cofactor. In terms of tissue distribution, expressed in both healthy and inflamed gingival tissue samples at similar levels, with higher expression in the gingival connective tissue compared to gingival epithelium. Strongest expression in testis, followed by leukocytes.

The protein localises to the membrane. The protein is Putative glycosyltransferase 6 domain-containing protein 1 (GLT6D1) of Homo sapiens (Human).